We begin with the raw amino-acid sequence, 318 residues long: Dehydrogenase/reductase SDR family member 7C-B (318 aa).

Positions 1-32 (MGMSDIMWLDVSWAWLVLTAVLLAAAVFYLYT) are cleaved as a signal peptide. 49 to 73 (LITDSLSTVGNECAKLFHAGGARLI) is an NAD(+) binding site. Residue serine 186 participates in substrate binding. Tyrosine 199 (proton acceptor) is an active-site residue.

It belongs to the short-chain dehydrogenases/reductases (SDR) family.

The protein resides in the secreted. Putative oxidoreductase. The protein is Dehydrogenase/reductase SDR family member 7C-B (dhrs7cb) of Danio rerio (Zebrafish).